We begin with the raw amino-acid sequence, 544 residues long: Propane 2-monooxygenase, hydroxylase component large subunit (544 aa).

6 residues coordinate Fe cation: E97, E127, H130, E192, E226, and H229.

The protein belongs to the TmoA/XamoA family. As to quaternary structure, the propane 2-monooxygenase multicomponent enzyme system is composed of an electron transfer component and a monooxygenase component interacting with the effector protein PrmD. The electron transfer component is composed of a reductase (PrmB), and the monooxygenase component is formed by a large subunit (PrmA) and a small subunit (PrmC). Probably requires the presence of the chaperonin-like protein PrmG to ensure a productive folding, resulting of a soluble PrmA, which leads to the active form of PrmABCD. Fe(2+) is required as a cofactor.

The catalysed reaction is propane + NADH + O2 + H(+) = propan-2-ol + NAD(+) + H2O. Component of the propane 2-monooxygenase multicomponent enzyme system which is involved in the degradation of propane via the O2-dependent hydroxylation of propane. Also able to catalyze the oxidation the water contaminant N-nitrosodimethylamine (NDMA). The polypeptide is Propane 2-monooxygenase, hydroxylase component large subunit (Rhodococcus jostii (strain RHA1)).